Consider the following 401-residue polypeptide: 8-amino-7-oxononanoate synthase (401 aa).

Residue R24 participates in substrate binding. A pyridoxal 5'-phosphate-binding site is contributed by 111-112 (GF). A substrate-binding site is contributed by H137. S183, H211, and T240 together coordinate pyridoxal 5'-phosphate. An N6-(pyridoxal phosphate)lysine modification is found at K243. T357 contacts substrate.

It belongs to the class-II pyridoxal-phosphate-dependent aminotransferase family. BioF subfamily. Homodimer. It depends on pyridoxal 5'-phosphate as a cofactor.

It catalyses the reaction 6-carboxyhexanoyl-[ACP] + L-alanine + H(+) = (8S)-8-amino-7-oxononanoate + holo-[ACP] + CO2. Its pathway is cofactor biosynthesis; biotin biosynthesis. Functionally, catalyzes the decarboxylative condensation of pimeloyl-[acyl-carrier protein] and L-alanine to produce 8-amino-7-oxononanoate (AON), [acyl-carrier protein], and carbon dioxide. The chain is 8-amino-7-oxononanoate synthase from Xanthomonas axonopodis pv. citri (strain 306).